The primary structure comprises 316 residues: ATP synthase gamma chain (316 aa).

The protein belongs to the ATPase gamma chain family. In terms of assembly, F-type ATPases have 2 components, CF(1) - the catalytic core - and CF(0) - the membrane proton channel. CF(1) has five subunits: alpha(3), beta(3), gamma(1), delta(1), epsilon(1). CF(0) has three main subunits: a, b and c.

It localises to the cellular thylakoid membrane. Its function is as follows. Produces ATP from ADP in the presence of a proton gradient across the membrane. The gamma chain is believed to be important in regulating ATPase activity and the flow of protons through the CF(0) complex. This Prochlorococcus marinus (strain MIT 9301) protein is ATP synthase gamma chain.